A 136-amino-acid chain; its full sequence is Large ribosomal subunit protein uL16 (136 aa).

It belongs to the universal ribosomal protein uL16 family. Part of the 50S ribosomal subunit.

Its function is as follows. Binds 23S rRNA and is also seen to make contacts with the A and possibly P site tRNAs. In Rickettsia typhi (strain ATCC VR-144 / Wilmington), this protein is Large ribosomal subunit protein uL16.